Reading from the N-terminus, the 78-residue chain is MEFREQVLDLLTEVAENNVIKENPDVELFEEGIFDSFQTVGLLLEIQNKLDIEVSIMDFDRDEWATPNKIVEVLEELR.

One can recognise a Carrier domain in the interval 1 to 78 (MEFREQVLDL…KIVEVLEELR (78 aa)). O-(pantetheine 4'-phosphoryl)serine is present on serine 36.

This sequence belongs to the DltC family. Post-translationally, 4'-phosphopantetheine is transferred from CoA to a specific serine of apo-DCP.

It localises to the cytoplasm. The protein operates within cell wall biogenesis; lipoteichoic acid biosynthesis. In terms of biological role, carrier protein involved in the D-alanylation of lipoteichoic acid (LTA). The loading of thioester-linked D-alanine onto DltC is catalyzed by D-alanine--D-alanyl carrier protein ligase DltA. The DltC-carried D-alanyl group is further transferred to cell membrane phosphatidylglycerol (PG) by forming an ester bond, probably catalyzed by DltD. D-alanylation of LTA plays an important role in modulating the properties of the cell wall in Gram-positive bacteria, influencing the net charge of the cell wall. In Staphylococcus xylosus, this protein is D-alanyl carrier protein.